The following is a 74-amino-acid chain: Anionic peptide clone 8 (74 aa).

The first 24 residues, 1 to 24 (MVSKSLIVLLLVSVLVSTFFTTEA), serve as a signal peptide directing secretion.

This sequence belongs to the non-disulfide-bridged peptide (NDBP) superfamily. Long chain multifunctional peptide (group 2) family. In terms of tissue distribution, expressed by the venom gland.

The protein localises to the secreted. Its function is as follows. May be an antimicrobial peptide. The sequence is that of Anionic peptide clone 8 from Tityus costatus (Brazilian scorpion).